We begin with the raw amino-acid sequence, 1122 residues long: Adhesin P1 (1122 aa).

Positions 1-30 (MKKLIFKLSVGITPLALIGLGSFGLAVSGA) are cleaved as a signal peptide. 3 disordered regions span residues 183–209 (AGDT…GGAV), 244–273 (DYNS…GGRT), and 544–563 (QNSG…NGNE). Residues 195–208 (AGGGSGSSAAGGGA) show a composition bias toward gly residues. Residues 259–273 (LDSSESSESINGGRT) are compositionally biased toward polar residues. The helical transmembrane segment at 997-1021 (VLPVAISIPIIIIALALALGLGIGI) threads the bilayer. The disordered stretch occupies residues 1066-1122 (KTPQMLQANKKDGASSPSKPSAPAAKKPTGPTKPSAPGAKPTAPAKPKAPAPTKKIE). The segment covering 1079–1122 (ASSPSKPSAPAAKKPTGPTKPSAPGAKPTAPAKPKAPAPTKKIE) has biased composition (low complexity).

It belongs to the adhesin P1 family.

The protein localises to the cell membrane. In terms of biological role, could be involved in cytadherence. This Mycoplasmoides gallisepticum (Mycoplasma gallisepticum) protein is Adhesin P1 (gapA).